The following is a 132-amino-acid chain: Small ribosomal subunit protein bS16 (132 aa).

Basic and acidic residues predominate over residues 82 to 107; sequence DSKVQSKKEHNANKVKKEVKKPEAKK. A disordered region spans residues 82 to 132; the sequence is DSKVQSKKEHNANKVKKEVKKPEAKKAAASKPASKPSASKSASQKKTVSKK. Residues 108 to 132 show a composition bias toward low complexity; it reads AAASKPASKPSASKSASQKKTVSKK.

It belongs to the bacterial ribosomal protein bS16 family.

The polypeptide is Small ribosomal subunit protein bS16 (Malacoplasma penetrans (strain HF-2) (Mycoplasma penetrans)).